Consider the following 653-residue polypeptide: MKTIDMKYLRLLAKEYPTIAKTATEIINLEAIMNLPKGTEHFLSDVHGEYSAFEQVLRNGSGVVKRKIRDIFGAELDDAEINSLSTLIYYPEEKMDLIASETEDLHAWYRTTLFRLIELCQYVASKYTRSKVRKAMPEDFAYILEELLHENYNEDDKKLYYEEILQHIISLGRAEEFISALSLLIQQLVVDHLHIVGDVYDRGPYPDKIMDTLMNYHSLDFQWGNHDILWMGAASGSRVCAANVIRISARYLNLDILEDSYGISLRPLALFADEVYKDDPCTYFQPKNEENINYSNAEITQIARMHKAISIIQFKLEGEIIKRRKEFDMNHRLLLQFIDYKKGTIQLKGKEYQLLDNHFPTINPENPYELTDAERELIGKITAAFKNCRRLQKHVQFLYSKGSMFLTYNGNLLYHGCIPLHKDGTFMEMKLRGEKYAGRALLEQFEILTREAYVRPTGTKEKKYACDIVWYLWTGAISSLFGKSEMTTFERYFVAEKETHTEEKNPYYKLRNNELICKQILEEFELDGECGHIINGHTPVKEGKGESPIKASGKMLVIDGGFAKAYHKETNLAGYTLLFNSYGLQLVSHQPFTTKEDAIKNETDILSTRQVIEMEINRKRVRDTDIGAKLSEQAEDLKLLLDAYRNGLLHENR.

This sequence belongs to the FBPase class 3 family. Mn(2+) is required as a cofactor.

It catalyses the reaction beta-D-fructose 1,6-bisphosphate + H2O = beta-D-fructose 6-phosphate + phosphate. The protein operates within carbohydrate biosynthesis; gluconeogenesis. This chain is Fructose-1,6-bisphosphatase class 3, found in Listeria monocytogenes serovar 1/2a (strain ATCC BAA-679 / EGD-e).